The chain runs to 394 residues: MAKRLFMFEKPLGMRDTLPFLYEMKKQVRRTMAEEIERWGYEFIETPTLEYYETVGTASAIADHRLFKLLDQQGHTLVLRPDMTAPIARVAASRLYEDSNPLRLAYNANVFRAQQREGGRPAEFEQIGVELIGDGTVMADAEVISLMAALLKRVGLSHFSVAVGHIGYVNALFLEILGNEERASVLRRFLYEKNYVGYREHVKSLPLSSIDQKRLLDLLSLRGGSEAIEAAKALVTSEEGQRAADELAALLAALKTYGVSEAVKLDMALVSHMSYYTGILFEVYAEQVGFPIGNGGRYDDLLAKFSRPAPATGFGLRVDRLIEAIGETDVRGEIECIVFSQERLAEAVELAEAKRAEGQRVVLQHITGIRDIDAYSQRYRSIVYLLGRSGHDGQ.

It belongs to the class-II aminoacyl-tRNA synthetase family. HisZ subfamily. As to quaternary structure, heteromultimer composed of HisG and HisZ subunits.

It localises to the cytoplasm. It participates in amino-acid biosynthesis; L-histidine biosynthesis; L-histidine from 5-phospho-alpha-D-ribose 1-diphosphate: step 1/9. Functionally, required for the first step of histidine biosynthesis. May allow the feedback regulation of ATP phosphoribosyltransferase activity by histidine. In Geobacillus thermodenitrificans (strain NG80-2), this protein is ATP phosphoribosyltransferase regulatory subunit.